We begin with the raw amino-acid sequence, 211 residues long: Uracil phosphoribosyltransferase (211 aa).

5-phospho-alpha-D-ribose 1-diphosphate-binding positions include Arg77, Arg102, and 129-137 (DPMLATGGS). Residues Ile192 and 197–199 (GDA) each bind uracil. Asp198 lines the 5-phospho-alpha-D-ribose 1-diphosphate pocket.

This sequence belongs to the UPRTase family. The cofactor is Mg(2+).

The enzyme catalyses UMP + diphosphate = 5-phospho-alpha-D-ribose 1-diphosphate + uracil. The protein operates within pyrimidine metabolism; UMP biosynthesis via salvage pathway; UMP from uracil: step 1/1. Allosterically activated by GTP. Functionally, catalyzes the conversion of uracil and 5-phospho-alpha-D-ribose 1-diphosphate (PRPP) to UMP and diphosphate. This is Uracil phosphoribosyltransferase from Corynebacterium diphtheriae (strain ATCC 700971 / NCTC 13129 / Biotype gravis).